The chain runs to 206 residues: Small ribosomal subunit protein eS1 (206 aa).

This sequence belongs to the eukaryotic ribosomal protein eS1 family.

The protein is Small ribosomal subunit protein eS1 of Natronomonas pharaonis (strain ATCC 35678 / DSM 2160 / CIP 103997 / JCM 8858 / NBRC 14720 / NCIMB 2260 / Gabara) (Halobacterium pharaonis).